Reading from the N-terminus, the 369-residue chain is Anhydro-N-acetylmuramic acid kinase (369 aa).

12–19 (GTSMDGVD) is a binding site for ATP.

The protein belongs to the anhydro-N-acetylmuramic acid kinase family.

It carries out the reaction 1,6-anhydro-N-acetyl-beta-muramate + ATP + H2O = N-acetyl-D-muramate 6-phosphate + ADP + H(+). It functions in the pathway amino-sugar metabolism; 1,6-anhydro-N-acetylmuramate degradation. It participates in cell wall biogenesis; peptidoglycan recycling. Its function is as follows. Catalyzes the specific phosphorylation of 1,6-anhydro-N-acetylmuramic acid (anhMurNAc) with the simultaneous cleavage of the 1,6-anhydro ring, generating MurNAc-6-P. Is required for the utilization of anhMurNAc either imported from the medium or derived from its own cell wall murein, and thus plays a role in cell wall recycling. The chain is Anhydro-N-acetylmuramic acid kinase from Shewanella pealeana (strain ATCC 700345 / ANG-SQ1).